The sequence spans 268 residues: Nitrite transporter NirC (268 aa).

Topologically, residues 1 to 25 (MFTDTINKCAANAARIARLSANNPL) are cytoplasmic. A helical membrane pass occupies residues 26 to 46 (GFWVSSAMAGAYVGLGIILIF). The Periplasmic portion of the chain corresponds to 47–59 (TLGNLLDPSVRPL). The helical transmembrane segment at 60–80 (VMGATFGIALTLVIIAGSELF) threads the bilayer. At 81-112 (TGHTMFLTFGVKAGSISHGQMWAILPQTWLGN) the chain is on the cytoplasmic side. A helical membrane pass occupies residues 113–133 (LVGSVFVAMLYSWGGGSLLPV). Residues 134–151 (DTSIVHSVALAKTTAPAM) lie on the Periplasmic side of the membrane. The helical transmembrane segment at 152-172 (VLFFKGALCNWLVCLAIWMAL) threads the bilayer. The Cytoplasmic portion of the chain corresponds to 173–179 (RTEGAAK). The helical transmembrane segment at 180 to 200 (FIAIWWCLLAFIASGYEHSIA) threads the bilayer. The Periplasmic portion of the chain corresponds to 201–225 (NMTLFALSWFGNHSEAYTLAGIGHN). The chain crosses the membrane as a helical span at residues 226–246 (LLWVTLGNTLSGAVFMGLGYW). Topologically, residues 247–268 (YATPKANRPVADKFNQTETAAG) are cytoplasmic.

The protein belongs to the FNT transporter (TC 1.A.16) family.

Its subcellular location is the cell inner membrane. Functionally, catalyzes nitrite uptake and nitrite export across the cytoplasmic membrane. Is up to 10-fold more active than NarK or NarU in nitrite uptake for subsequent reduction in the cytoplasm by the NirB/NirD nitrite reductase. This Escherichia coli (strain K12) protein is Nitrite transporter NirC (nirC).